The chain runs to 914 residues: Serine/threonine-protein kinase MST20 (914 aa).

Residues 1 to 12 (MDGHSNFTQPSD) show a composition bias toward polar residues. Disordered regions lie at residues 1-140 (MDGH…QLQN), 156-184 (NQYS…LTFN), and 251-286 (AMSE…VLRK). Low complexity-rich tracts occupy residues 13 to 26 (TSHA…SSSS), 63 to 72 (RSSTSLRRAP), and 79 to 97 (TPTS…PSSS). The segment covering 122 to 136 (ARDRDSDPARNDHGH) has biased composition (basic and acidic residues). Residues 156-166 (NQYSAASHRRS) are compositionally biased toward basic residues. The segment covering 175–184 (PQSSNSLTFN) has biased composition (polar residues). Residues 271-280 (RYSDETKEPK) show a composition bias toward basic and acidic residues. The 14-residue stretch at 306–319 (ISAPENPVHVTHVG) folds into the CRIB domain. Positions 408–615 (SPMISPPASP…RHRSRQSNGL (208 aa)) are disordered. Composition is skewed to low complexity over residues 516–548 (AYPA…QAQA) and 562–576 (QPQA…SQHQ). Residues 577–586 (YSRPTDANGA) show a composition bias toward polar residues. Positions 587–596 (QQTQRPQQPQ) are enriched in low complexity. Residues 634–885 (YRSFTKIGQG…AHDLLRHEFM (252 aa)) enclose the Protein kinase domain. ATP-binding positions include 640–648 (IGQGASGGV) and Lys663. Catalysis depends on Asp753, which acts as the Proton acceptor.

This sequence belongs to the protein kinase superfamily. STE Ser/Thr protein kinase family. STE20 subfamily.

The protein localises to the cytoplasm. It localises to the nucleus. It carries out the reaction L-seryl-[protein] + ATP = O-phospho-L-seryl-[protein] + ADP + H(+). The catalysed reaction is L-threonyl-[protein] + ATP = O-phospho-L-threonyl-[protein] + ADP + H(+). MAP4K component of the MAPK pathway required for the mating pheromone response and the regulation of cell polarity and cell cycle. Phosphorylates histone H2B to form H2BS10ph. Is involved in conidiation, aerial hyphal growth and infection-related morphogenesis. The polypeptide is Serine/threonine-protein kinase MST20 (MST20) (Pyricularia oryzae (strain 70-15 / ATCC MYA-4617 / FGSC 8958) (Rice blast fungus)).